Here is an 85-residue protein sequence, read N- to C-terminus: U4-theraphotoxin-Hhn1s (85 aa).

The first 22 residues, 1–22, serve as a signal peptide directing secretion; sequence MKVTLIAILTCAAVLVLHTTAA. Positions 23 to 48 are excised as a propeptide; it reads EELEAESQLMEVGMPDTELAAVDEER. 3 disulfide bridges follow: C52–C66, C56–C77, and C71–C82.

Belongs to the neurotoxin 12 (Hwtx-2) family. 02 (Hwtx-2) subfamily. In terms of tissue distribution, expressed by the venom gland.

The protein localises to the secreted. In terms of biological role, postsynaptic neurotoxin. This Cyriopagopus hainanus (Chinese bird spider) protein is U4-theraphotoxin-Hhn1s.